Here is a 649-residue protein sequence, read N- to C-terminus: Solute carrier family 22 member 17 (649 aa).

The tract at residues 1–70 (MAPRVATGTP…GGDGLGSSLS (70 aa)) is disordered. The span at 24–34 (VEITPTSNGQV) shows a compositional bias: polar residues. Positions 47–57 (QGEREREREGE) are enriched in basic and acidic residues. Asparagine 134 and asparagine 143 each carry an N-linked (GlcNAc...) asparagine glycan. 11 helical membrane-spanning segments follow: residues 211 to 231 (VILE…FLGY), 240 to 260 (GIVL…AAAG), 265 to 285 (VMAL…GVYL), 300 to 320 (ALAG…LALV), 330 to 350 (MITA…FLES), 414 to 433 (NIWK…HAIR), 448 to 468 (FYLC…FLGV), 477 to 497 (GILL…LGLW), 526 to 546 (FSVL…LLAA), 557 to 577 (GLGL…AQRL), and 584 to 604 (FLQH…IMLL).

Belongs to the major facilitator (TC 2.A.1) superfamily. Organic cation transporter (TC 2.A.1.19) family. In terms of tissue distribution, expressed in brain.

The protein localises to the cell membrane. The protein resides in the vacuole membrane. Functionally, cell surface receptor for LCN2 (24p3) that plays a key role in iron homeostasis and transport. Able to bind iron-bound LCN2 (holo-24p3), followed by internalization of holo-24p3 and release of iron, thereby increasing intracellular iron concentration and leading to inhibition of apoptosis. Also binds iron-free LCN2 (apo-24p3), followed by internalization of apo-24p3 and its association with an intracellular siderophore, leading to iron chelation and iron transfer to the extracellular medium, thereby reducing intracellular iron concentration and resulting in apoptosis. In Homo sapiens (Human), this protein is Solute carrier family 22 member 17 (SLC22A17).